We begin with the raw amino-acid sequence, 722 residues long: Catalase B (722 aa).

The signal sequence occupies residues 1 to 15 (MRALGLVGLVGVANA). Catalysis depends on residues His100 and Asn173. Tyr388 is a heme binding site.

Belongs to the catalase family. It depends on heme as a cofactor.

Its subcellular location is the secreted. The enzyme catalyses 2 H2O2 = O2 + 2 H2O. Occurs in almost all aerobically respiring organisms and serves to protect cells from the toxic effects of hydrogen peroxide. This is Catalase B (catB) from Emericella nidulans (strain FGSC A4 / ATCC 38163 / CBS 112.46 / NRRL 194 / M139) (Aspergillus nidulans).